Consider the following 372-residue polypeptide: 4-hydroxy-3-methylbut-2-en-1-yl diphosphate synthase (flavodoxin) (372 aa).

[4Fe-4S] cluster is bound by residues Cys270, Cys273, Cys305, and Glu312.

It belongs to the IspG family. It depends on [4Fe-4S] cluster as a cofactor.

The catalysed reaction is (2E)-4-hydroxy-3-methylbut-2-enyl diphosphate + oxidized [flavodoxin] + H2O + 2 H(+) = 2-C-methyl-D-erythritol 2,4-cyclic diphosphate + reduced [flavodoxin]. The protein operates within isoprenoid biosynthesis; isopentenyl diphosphate biosynthesis via DXP pathway; isopentenyl diphosphate from 1-deoxy-D-xylulose 5-phosphate: step 5/6. Converts 2C-methyl-D-erythritol 2,4-cyclodiphosphate (ME-2,4cPP) into 1-hydroxy-2-methyl-2-(E)-butenyl 4-diphosphate. The polypeptide is 4-hydroxy-3-methylbut-2-en-1-yl diphosphate synthase (flavodoxin) (Pseudoalteromonas translucida (strain TAC 125)).